Here is a 132-residue protein sequence, read N- to C-terminus: ATP synthase epsilon chain (132 aa).

This sequence belongs to the ATPase epsilon chain family. In terms of assembly, F-type ATPases have 2 components, CF(1) - the catalytic core - and CF(0) - the membrane proton channel. CF(1) has five subunits: alpha(3), beta(3), gamma(1), delta(1), epsilon(1). CF(0) has three main subunits: a, b and c.

The protein resides in the cell inner membrane. Its function is as follows. Produces ATP from ADP in the presence of a proton gradient across the membrane. This chain is ATP synthase epsilon chain (atpC), found in Aquifex aeolicus (strain VF5).